A 238-amino-acid polypeptide reads, in one-letter code: Uroporphyrinogen-III C-methyltransferase (238 aa).

Residues P11, 87 to 89 (GGD), 117 to 118 (TS), and M170 contribute to the S-adenosyl-L-homocysteine site.

It belongs to the precorrin methyltransferase family. In terms of assembly, monomer.

The enzyme catalyses uroporphyrinogen III + 2 S-adenosyl-L-methionine = precorrin-2 + 2 S-adenosyl-L-homocysteine + H(+). Its pathway is cofactor biosynthesis; adenosylcobalamin biosynthesis; precorrin-2 from uroporphyrinogen III: step 1/1. It participates in porphyrin-containing compound metabolism; siroheme biosynthesis; precorrin-2 from uroporphyrinogen III: step 1/1. With respect to regulation, SUMT exhibits a substrate inhibition phenomenon at uroporphyrinogen III concentrations above 0.5 uM; this property might play a regulatory role in cobalamin biosynthesis. Its function is as follows. Catalyzes the two successive C-2 and C-7 methylation reactions involved in the conversion of uroporphyrinogen III to precorrin-2 via the intermediate formation of precorrin-1. It is a step in the biosynthesis of both cobalamin (vitamin B12) and siroheme. The protein is Uroporphyrinogen-III C-methyltransferase of Priestia megaterium (Bacillus megaterium).